Reading from the N-terminus, the 553-residue chain is Pseudouridylate synthase RPUSD2 (553 aa).

The segment at 76-135 (AVGKQVPESGDQAQGGEGQLPSNGEQTPAPVADSGKRKKRRGATGERVVPPPKKRRTGVS) is disordered. D287 is an active-site residue. T490 is subject to Phosphothreonine.

The protein belongs to the pseudouridine synthase RluA family.

The enzyme catalyses a uridine in mRNA = a pseudouridine in mRNA. In terms of biological role, pseudouridine synthase that catalyzes pseudouridylation of mRNAs. This is Pseudouridylate synthase RPUSD2 from Mus musculus (Mouse).